A 261-amino-acid polypeptide reads, in one-letter code: Thiamine thiazole synthase (261 aa).

Residues Ser-33, 52-53 (ER), Gly-60, Val-124, and 152-154 (HVD) each bind NAD(+). Fe cation-binding residues include Asp-154 and His-169. Met-219 serves as a coordination point for NAD(+). Arg-229 contacts glycine.

The protein belongs to the THI4 family. In terms of assembly, homooctamer; tetramer of dimers. It depends on Fe(2+) as a cofactor.

The catalysed reaction is hydrogen sulfide + glycine + NAD(+) = ADP-5-ethyl-4-methylthiazole-2-carboxylate + nicotinamide + 3 H2O + H(+). The protein operates within cofactor biosynthesis; thiamine diphosphate biosynthesis. In terms of biological role, involved in the biosynthesis of the thiazole moiety of thiamine. Catalyzes the conversion of NAD and glycine to adenosine diphosphate 5-(2-hydroxyethyl)-4-methylthiazole-2-carboxylate (ADT), an adenylated thiazole intermediate, using free sulfide as a source of sulfur. In Pyrobaculum arsenaticum (strain DSM 13514 / JCM 11321 / PZ6), this protein is Thiamine thiazole synthase.